The chain runs to 103 residues: Acyl-CoA-binding protein (103 aa).

The region spanning 18-103 (HQADFDEAAE…AKTMVEKYGI (86 aa)) is the ACB domain. Residues K30, 45–49 (YGFYK), K67, K71, and Y90 each bind an acyl-CoA.

The protein belongs to the ACBP family. As to quaternary structure, monomer.

Its subcellular location is the endoplasmic reticulum. The protein resides in the golgi apparatus. Functionally, binds medium- and long-chain acyl-CoA esters with very high affinity and may function as an intracellular carrier of acyl-CoA esters. It is also able to displace diazepam from the benzodiazepine (BZD) recognition site located on the GABA type A receptor. It is therefore possible that this protein also acts as a neuropeptide to modulate the action of the GABA receptor. The polypeptide is Acyl-CoA-binding protein (DBI) (Anas platyrhynchos (Mallard)).